The following is a 499-amino-acid chain: Aspartyl/glutamyl-tRNA(Asn/Gln) amidotransferase subunit B (499 aa).

It belongs to the GatB/GatE family. GatB subfamily. As to quaternary structure, heterotrimer of A, B and C subunits.

The catalysed reaction is L-glutamyl-tRNA(Gln) + L-glutamine + ATP + H2O = L-glutaminyl-tRNA(Gln) + L-glutamate + ADP + phosphate + H(+). The enzyme catalyses L-aspartyl-tRNA(Asn) + L-glutamine + ATP + H2O = L-asparaginyl-tRNA(Asn) + L-glutamate + ADP + phosphate + 2 H(+). Functionally, allows the formation of correctly charged Asn-tRNA(Asn) or Gln-tRNA(Gln) through the transamidation of misacylated Asp-tRNA(Asn) or Glu-tRNA(Gln) in organisms which lack either or both of asparaginyl-tRNA or glutaminyl-tRNA synthetases. The reaction takes place in the presence of glutamine and ATP through an activated phospho-Asp-tRNA(Asn) or phospho-Glu-tRNA(Gln). The chain is Aspartyl/glutamyl-tRNA(Asn/Gln) amidotransferase subunit B from Bartonella quintana (strain Toulouse) (Rochalimaea quintana).